A 273-amino-acid polypeptide reads, in one-letter code: Shikimate dehydrogenase (NADP(+)) (273 aa).

Shikimate-binding positions include Ser15–Ser17 and Thr62. The active-site Proton acceptor is Lys66. Glu78 lines the NADP(+) pocket. The shikimate site is built by Asn87 and Asp102. NADP(+) is bound by residues Gly126–Ala130, Asn150–Lys155, and Ile217. Tyr219 lines the shikimate pocket. Residue Gly240 coordinates NADP(+).

It belongs to the shikimate dehydrogenase family. Homodimer.

The catalysed reaction is shikimate + NADP(+) = 3-dehydroshikimate + NADPH + H(+). It functions in the pathway metabolic intermediate biosynthesis; chorismate biosynthesis; chorismate from D-erythrose 4-phosphate and phosphoenolpyruvate: step 4/7. Its function is as follows. Involved in the biosynthesis of the chorismate, which leads to the biosynthesis of aromatic amino acids. Catalyzes the reversible NADPH linked reduction of 3-dehydroshikimate (DHSA) to yield shikimate (SA). The protein is Shikimate dehydrogenase (NADP(+)) of Nitrosopumilus maritimus (strain SCM1).